The chain runs to 70 residues: Bowman-Birk type proteinase inhibitor A7 (70 aa).

Cystine bridges form between Cys12–Cys31, Cys18–Cys29, Cys38–Cys45, and Cys42–Cys59.

It belongs to the Bowman-Birk serine protease inhibitor family. As to expression, expressed in bulb (at protein level).

Functionally, serine protease inhibitor. Strongly inhibits trypsin (Ki = 7.1 nM) and almost completely inhibits elastase. Also inhibits chymotrypsin (Ki = 19 nM). Does not inhibit bacterial subtilisin. The polypeptide is Bowman-Birk type proteinase inhibitor A7 (Hyacinthus orientalis (Common hyacinth)).